We begin with the raw amino-acid sequence, 313 residues long: Acetaldehyde dehydrogenase 3 (313 aa).

NAD(+) is bound at residue 13–16 (SGNI). Cys-133 (acyl-thioester intermediate) is an active-site residue. Residues 164–172 (SAGPGTRAN) and Asn-291 contribute to the NAD(+) site.

This sequence belongs to the acetaldehyde dehydrogenase family.

It carries out the reaction acetaldehyde + NAD(+) + CoA = acetyl-CoA + NADH + H(+). The polypeptide is Acetaldehyde dehydrogenase 3 (Paraburkholderia xenovorans (strain LB400)).